The primary structure comprises 307 residues: Cyclin-dependent kinase 5 activator 1 (307 aa).

Residue Gly2 is the site of N-myristoyl glycine attachment. Residue Ser8 is modified to Phosphoserine; by CDK5. Residues 97–133 (TFAQPPPAQPPAPPASQLSGSQTGVSSSVKKAPHPAI) are disordered. Over residues 100–110 (QPPPAQPPAPP) the composition is skewed to pro residues. Residues 112–125 (SQLSGSQTGVSSSV) show a composition bias toward polar residues. Thr138 is modified (phosphothreonine; by CDK5).

This sequence belongs to the cyclin-dependent kinase 5 activator family. In terms of assembly, heterodimer composed of a catalytic subunit CDK5 and a regulatory subunit CDK5R1 (p25) and macromolecular complex composed of at least CDK5, CDK5R1 (p35) and CDK5RAP1 or CDK5RAP2 or CDK5RAP3. Only the heterodimer shows kinase activity. Interacts with EPHA4 and NGEF; may mediate the activation of NGEF by EPHA4. Interacts with RASGRF2. The complex p35/CDK5 interacts with CLOCK. The p35 form is proteolytically cleaved by calpain, giving rise to the p25 form. P35 has a 5 to 10 fold shorter half-life compared to p25. The conversion results in deregulation of the CDK5 kinase: p25/CDK5 kinase displays an increased and altered tau phosphorylation in comparison to the p35/CDK5 kinase in vivo. In terms of processing, myristoylated. A proper myristoylation signal is essential for the proper distribution of p35. Post-translationally, phosphorylation at Ser-8 and Thr-138 by CDK5 prevents calpain-mediated proteolysis. Ubiquitinated, leading to its degradation: degradation of p35 by proteasome results in down-regulation of CDK5 activity. During this process, CDK5 phosphorylates p35 and induces its ubiquitination and subsequent degradation. Ubiquitinated by the CRL2(FEM1B) complex, which recognizes the -Gly-Leu-Asp-Arg C-degron at the C-terminus, leading to its degradation. In terms of tissue distribution, brain and neuron specific.

The protein resides in the cell membrane. It localises to the cell projection. It is found in the neuron projection. Its subcellular location is the nucleus. The protein localises to the cytoplasm. The protein resides in the perinuclear region. It localises to the perikaryon. Its function is as follows. p35 is a neuron specific activator of CDK5. The complex p35/CDK5 is required for neurite outgrowth and cortical lamination. Involved in dendritic spine morphogenesis by mediating the EFNA1-EPHA4 signaling. Activator of TPKII. The complex p35/CDK5 participates in the regulation of the circadian clock by modulating the function of CLOCK protein: phosphorylates CLOCK at 'Thr-451' and 'Thr-461' and regulates the transcriptional activity of the CLOCK-BMAL1 heterodimer in association with altered stability and subcellular distribution. This Rattus norvegicus (Rat) protein is Cyclin-dependent kinase 5 activator 1 (Cdk5r1).